A 342-amino-acid polypeptide reads, in one-letter code: D-erythrose-4-phosphate dehydrogenase (342 aa).

NAD(+) is bound at residue 12 to 13 (RI). Substrate-binding positions include 154 to 156 (SCT), Arg-200, 213 to 214 (TK), and Arg-236. The Nucleophile role is filled by Cys-155. Asn-318 contacts NAD(+).

The protein belongs to the glyceraldehyde-3-phosphate dehydrogenase family. Epd subfamily. In terms of assembly, homotetramer.

Its subcellular location is the cytoplasm. The enzyme catalyses D-erythrose 4-phosphate + NAD(+) + H2O = 4-phospho-D-erythronate + NADH + 2 H(+). It participates in cofactor biosynthesis; pyridoxine 5'-phosphate biosynthesis; pyridoxine 5'-phosphate from D-erythrose 4-phosphate: step 1/5. In terms of biological role, catalyzes the NAD-dependent conversion of D-erythrose 4-phosphate to 4-phosphoerythronate. This Klebsiella pneumoniae (strain 342) protein is D-erythrose-4-phosphate dehydrogenase.